Consider the following 161-residue polypeptide: Small ribosomal subunit protein uS19 (161 aa).

The segment covering 1–19 has biased composition (basic residues); that stretch reads MARQKKYSGKGGARKKNKQ. A disordered region spans residues 1–26; the sequence is MARQKKYSGKGGARKKNKQKQNVAPR.

Belongs to the universal ribosomal protein uS19 family.

In terms of biological role, protein S19 forms a complex with S13 that binds strongly to the 16S ribosomal RNA. The polypeptide is Small ribosomal subunit protein uS19 (Methanococcus maripaludis (strain DSM 14266 / JCM 13030 / NBRC 101832 / S2 / LL)).